A 450-amino-acid polypeptide reads, in one-letter code: tRNA modification GTPase MnmE (450 aa).

(6S)-5-formyl-5,6,7,8-tetrahydrofolate-binding residues include K21, E78, and K117. The TrmE-type G domain maps to 213 to 376 (GHALSIVGKP…LSQKISAFFP (164 aa)). N223 is a K(+) binding site. Residues 223 to 228 (NAGKSS), 242 to 248 (SDIKGTT), and 267 to 270 (DTAG) contribute to the GTP site. Mg(2+) is bound at residue S227. K(+) contacts are provided by S242, I244, and T247. A Mg(2+)-binding site is contributed by T248. K450 contributes to the (6S)-5-formyl-5,6,7,8-tetrahydrofolate binding site.

Belongs to the TRAFAC class TrmE-Era-EngA-EngB-Septin-like GTPase superfamily. TrmE GTPase family. In terms of assembly, homodimer. Heterotetramer of two MnmE and two MnmG subunits. K(+) serves as cofactor.

Its subcellular location is the cytoplasm. Functionally, exhibits a very high intrinsic GTPase hydrolysis rate. Involved in the addition of a carboxymethylaminomethyl (cmnm) group at the wobble position (U34) of certain tRNAs, forming tRNA-cmnm(5)s(2)U34. The protein is tRNA modification GTPase MnmE of Helicobacter pylori (strain Shi470).